We begin with the raw amino-acid sequence, 194 residues long: Potassium-transporting ATPase KdpC subunit (194 aa).

Residues 12–34 (LFLLLLTGGVYPLLTTALGQWWF) form a helical membrane-spanning segment.

This sequence belongs to the KdpC family. As to quaternary structure, the system is composed of three essential subunits: KdpA, KdpB and KdpC.

Its subcellular location is the cell inner membrane. Functionally, part of the high-affinity ATP-driven potassium transport (or Kdp) system, which catalyzes the hydrolysis of ATP coupled with the electrogenic transport of potassium into the cytoplasm. This subunit acts as a catalytic chaperone that increases the ATP-binding affinity of the ATP-hydrolyzing subunit KdpB by the formation of a transient KdpB/KdpC/ATP ternary complex. The chain is Potassium-transporting ATPase KdpC subunit from Salmonella schwarzengrund (strain CVM19633).